A 242-amino-acid polypeptide reads, in one-letter code: Uridylate kinase (242 aa).

16-19 (KVSG) lines the ATP pocket. Gly58 contacts UMP. ATP contacts are provided by Gly59 and Arg63. UMP-binding positions include Asp78 and 139-146 (TGNPFCTT). Thr166, Gln167, Tyr172, and Asp175 together coordinate ATP.

Belongs to the UMP kinase family. Homohexamer.

The protein resides in the cytoplasm. The catalysed reaction is UMP + ATP = UDP + ADP. It functions in the pathway pyrimidine metabolism; CTP biosynthesis via de novo pathway; UDP from UMP (UMPK route): step 1/1. Its activity is regulated as follows. Inhibited by UTP. Catalyzes the reversible phosphorylation of UMP to UDP. The chain is Uridylate kinase from Rickettsia massiliae (strain Mtu5).